Reading from the N-terminus, the 302-residue chain is HTH-type transcriptional regulator GbpR (302 aa).

The HTH lysR-type domain occupies 1 to 56 (MSHLRMLVMIEEHGQVSAAAAAMNMTQPAASRMLSEMEAIVKSPLCQRASRGVVLT). A DNA-binding region (H-T-H motif) is located at residues 16 to 35 (VSAAAAAMNMTQPAASRMLS).

The protein belongs to the LysR transcriptional regulatory family.

In terms of biological role, activator of the expression of chvE when bound to its inducer and represses its expression in the absence of inducer (L-arabinose, D-fucose or D-galactose). Negatively regulates its own expression. This chain is HTH-type transcriptional regulator GbpR (gbpR), found in Rhizobium radiobacter (Agrobacterium tumefaciens).